A 502-amino-acid chain; its full sequence is Maturase K (502 aa).

This sequence belongs to the intron maturase 2 family. MatK subfamily.

It localises to the plastid. Its subcellular location is the chloroplast. In terms of biological role, usually encoded in the trnK tRNA gene intron. Probably assists in splicing its own and other chloroplast group II introns. Binds its homologous trnK precursor transcript. The chain is Maturase K from Sinapis alba (White mustard).